The primary structure comprises 195 residues: Xanthine phosphoribosyltransferase (195 aa).

Xanthine is bound by residues Leu-20 and Asn-27. 128-132 (ANGQA) is a 5-phospho-alpha-D-ribose 1-diphosphate binding site. Position 156 (Lys-156) interacts with xanthine.

The protein belongs to the purine/pyrimidine phosphoribosyltransferase family. Xpt subfamily. Homodimer.

The protein localises to the cytoplasm. The enzyme catalyses XMP + diphosphate = xanthine + 5-phospho-alpha-D-ribose 1-diphosphate. Its pathway is purine metabolism; XMP biosynthesis via salvage pathway; XMP from xanthine: step 1/1. Functionally, converts the preformed base xanthine, a product of nucleic acid breakdown, to xanthosine 5'-monophosphate (XMP), so it can be reused for RNA or DNA synthesis. In Limosilactobacillus fermentum (strain NBRC 3956 / LMG 18251) (Lactobacillus fermentum), this protein is Xanthine phosphoribosyltransferase.